The chain runs to 502 residues: ATP synthase subunit alpha (502 aa).

Residue 169–176 (GDRQTGKT) coordinates ATP.

Belongs to the ATPase alpha/beta chains family. In terms of assembly, F-type ATPases have 2 components, CF(1) - the catalytic core - and CF(0) - the membrane proton channel. CF(1) has five subunits: alpha(3), beta(3), gamma(1), delta(1), epsilon(1). CF(0) has three main subunits: a(1), b(2) and c(9-12). The alpha and beta chains form an alternating ring which encloses part of the gamma chain. CF(1) is attached to CF(0) by a central stalk formed by the gamma and epsilon chains, while a peripheral stalk is formed by the delta and b chains.

It localises to the cell inner membrane. The enzyme catalyses ATP + H2O + 4 H(+)(in) = ADP + phosphate + 5 H(+)(out). Functionally, produces ATP from ADP in the presence of a proton gradient across the membrane. The alpha chain is a regulatory subunit. In Geobacter sp. (strain M21), this protein is ATP synthase subunit alpha.